Consider the following 349-residue polypeptide: DNA replication and repair protein RecF (349 aa).

30-37 (GKNGSGKT) is an ATP binding site.

This sequence belongs to the RecF family.

The protein resides in the cytoplasm. Functionally, the RecF protein is involved in DNA metabolism; it is required for DNA replication and normal SOS inducibility. RecF binds preferentially to single-stranded, linear DNA. It also seems to bind ATP. The chain is DNA replication and repair protein RecF from Francisella tularensis subsp. novicida (strain U112).